The following is an 89-amino-acid chain: Putative regulatory protein RBAM_015500 (89 aa).

It belongs to the RemA family.

The polypeptide is Putative regulatory protein RBAM_015500 (Bacillus velezensis (strain DSM 23117 / BGSC 10A6 / LMG 26770 / FZB42) (Bacillus amyloliquefaciens subsp. plantarum)).